The chain runs to 178 residues: CASP-like protein 5B1 (178 aa).

At 1-37 (MDASNPIVHPIGDHHAVDLEEGPLIVTMKELPGMPGT) the chain is on the cytoplasmic side. Residues 38–58 (IGGLALRVGQFLFAAAAIVIM) form a helical membrane-spanning segment. Residues 59–69 (VTGDEFTNYTA) lie on the Extracellular side of the membrane. N-linked (GlcNAc...) asparagine glycosylation occurs at Asn66. Residues 70 to 90 (FCYLVAAMSLQFLWSFMLAIL) traverse the membrane as a helical segment. Over 91–104 (DTYALLIKRGLRNS) the chain is Cytoplasmic. A helical transmembrane segment spans residues 105-125 (VLLSLFVVGDWVTATLSLAAA). Over 126–154 (CSTAGVTVLFDNDLNYCGQMHCHRYQLSA) the chain is Extracellular. A helical membrane pass occupies residues 155–175 (AMAFLSWLLIGMSSLLTFWLW). At 176–178 (ASE) the chain is on the cytoplasmic side.

This sequence belongs to the Casparian strip membrane proteins (CASP) family. Homodimer and heterodimers.

It localises to the cell membrane. This chain is CASP-like protein 5B1, found in Ginkgo biloba (Ginkgo).